The following is a 515-amino-acid chain: Bifunctional purine biosynthesis protein PurH (515 aa).

Positions Met-1 to Val-145 constitute an MGS-like domain.

It belongs to the PurH family.

It carries out the reaction (6R)-10-formyltetrahydrofolate + 5-amino-1-(5-phospho-beta-D-ribosyl)imidazole-4-carboxamide = 5-formamido-1-(5-phospho-D-ribosyl)imidazole-4-carboxamide + (6S)-5,6,7,8-tetrahydrofolate. It catalyses the reaction IMP + H2O = 5-formamido-1-(5-phospho-D-ribosyl)imidazole-4-carboxamide. Its pathway is purine metabolism; IMP biosynthesis via de novo pathway; 5-formamido-1-(5-phospho-D-ribosyl)imidazole-4-carboxamide from 5-amino-1-(5-phospho-D-ribosyl)imidazole-4-carboxamide (10-formyl THF route): step 1/1. The protein operates within purine metabolism; IMP biosynthesis via de novo pathway; IMP from 5-formamido-1-(5-phospho-D-ribosyl)imidazole-4-carboxamide: step 1/1. The protein is Bifunctional purine biosynthesis protein PurH of Streptococcus suis.